Here is a 426-residue protein sequence, read N- to C-terminus: Homeobox protein knotted-1-like LET12 (426 aa).

Disordered stretches follow at residues 1 to 26 (MEFQ…QQNA), 85 to 158 (QTSN…ENSW), and 270 to 290 (GVAP…DQAD). Residues 15 to 24 (QQQQQQQQQQ) are compositionally biased toward low complexity. Residues 104–114 (AGGGSNGGGSG) are compositionally biased toward gly residues. Positions 139-151 (ENNNNNNNNNNNN) are enriched in low complexity. The ELK domain occupies 327–347 (ELKHELKQGYKEKIVDIREEI). The homeobox; TALE-type DNA-binding region spans 348–411 (LRKRRAGKLP…NQRKRNWHSN (64 aa)). Residues 406-426 (RNWHSNPSTSSSQKSQTQECR) form a disordered region. Low complexity predominate over residues 413–426 (STSSSQKSQTQECR).

This sequence belongs to the TALE/KNOX homeobox family. In terms of tissue distribution, ubiquitously expressed in the mature plant.

It is found in the nucleus. In terms of biological role, may have a role to play in formative events in ovule and embryo morphogenesis. This is Homeobox protein knotted-1-like LET12 (LET12) from Solanum lycopersicum (Tomato).